Consider the following 122-residue polypeptide: MNLHAPNAEQDDIEYVDVCAVDDLWDGEMDVFDVGEHEVLLVKHEGRFHAYDGICPHQSVSLVEGHLTEDGVLICKAHEWQFSVEGGQGINPANVCLQSFPLKVEGGRVLIGTEPLPKEGEA.

The region spanning 16–111 (VDVCAVDDLW…LKVEGGRVLI (96 aa)) is the Rieske domain. Positions 55, 57, 75, and 78 each coordinate [2Fe-2S] cluster.

Belongs to the bacterial ring-hydroxylating dioxygenase ferredoxin component family. Homodimer. The alkene monooxygenase multicomponent enzyme system is composed of an electron transfer component and a monooxygenase component interacting with the effector protein XamoD. The electron transfer component is composed of a ferredoxin reductase (XamoF) and a ferredoxin (XamoC), and the monooxygenase component is formed by a heterohexamer (dimer of heterotrimers) of two alpha subunits (XamoA), two beta subunits (XamoE) and two gamma subunits (XamoB). Requires [2Fe-2S] cluster as cofactor.

It is found in the cytoplasm. Ferredoxin component of the alkene monooxygenase multicomponent enzyme system which catalyzes the O2- and NADH-dependent epoxidation of short chain (C2 to C6) alkenes to their corresponding epoxides. Functions as an intermediate electron transfer protein. This Xanthobacter autotrophicus (strain ATCC BAA-1158 / Py2) protein is Alkene monooxygenase system, ferredoxin component.